The primary structure comprises 610 residues: DNA replication regulator sld2 (610 aa).

Residues 28 to 42 (WAQKNDGKKPSREAI) show a composition bias toward basic and acidic residues. Disordered stretches follow at residues 28 to 115 (WAQK…AVHE), 127 to 261 (SPAV…ERSV), and 338 to 610 (EQGG…RRRR). Composition is skewed to polar residues over residues 86–110 (ETSL…SQHY) and 232–261 (TKTS…ERSV). 2 stretches are compositionally biased toward acidic residues: residues 373 to 386 (VPEE…DEAA) and 414 to 428 (FDDE…EEDL). Residues 442–464 (VFKKKGQKRTTRKVNMRPTRTKR) show a composition bias toward basic residues. Positions 470-480 (AEEEDDGEEEH) are enriched in acidic residues. Over residues 493-503 (KNLDGDDHHTL) the composition is skewed to basic and acidic residues. Residues 514 to 527 (EFDDGSEGEDEEAE) are compositionally biased toward acidic residues. Over residues 544–573 (SAKEKTKKDATTETKKKKGTKEGGDEEPAK) the composition is skewed to basic and acidic residues.

This sequence belongs to the SLD2 family.

The protein resides in the cytoplasm. It localises to the nucleus. Has a role in the initiation of DNA replication. Required at S-phase checkpoint. This is DNA replication regulator sld2 (drc-4) from Neurospora crassa (strain ATCC 24698 / 74-OR23-1A / CBS 708.71 / DSM 1257 / FGSC 987).